A 547-amino-acid polypeptide reads, in one-letter code: Chaperonin GroEL (547 aa).

ATP is bound by residues 30-33 (TLGP), lysine 51, 87-91 (DGTTT), glycine 415, and aspartate 496. Residues 528-547 (KGGGAPAGGGMPGGMGDMDF) form a disordered region.

Belongs to the chaperonin (HSP60) family. Forms a cylinder of 14 subunits composed of two heptameric rings stacked back-to-back. Interacts with the co-chaperonin GroES.

The protein localises to the cytoplasm. It carries out the reaction ATP + H2O + a folded polypeptide = ADP + phosphate + an unfolded polypeptide.. In terms of biological role, together with its co-chaperonin GroES, plays an essential role in assisting protein folding. The GroEL-GroES system forms a nano-cage that allows encapsulation of the non-native substrate proteins and provides a physical environment optimized to promote and accelerate protein folding. This is Chaperonin GroEL from Caulobacter vibrioides (strain ATCC 19089 / CIP 103742 / CB 15) (Caulobacter crescentus).